The primary structure comprises 367 residues: Glutamate 5-kinase (367 aa).

Lys10 is an ATP binding site. Residues Ser50, Asp137, and Asn149 each contribute to the substrate site. Residues 169-170 and 211-217 each bind ATP; these read TD and TGGMSTK. Positions 275 to 353 constitute a PUA domain; it reads AGEITVDEGA…QQIDAILGYE (79 aa).

The protein belongs to the glutamate 5-kinase family.

The protein resides in the cytoplasm. It catalyses the reaction L-glutamate + ATP = L-glutamyl 5-phosphate + ADP. The protein operates within amino-acid biosynthesis; L-proline biosynthesis; L-glutamate 5-semialdehyde from L-glutamate: step 1/2. Catalyzes the transfer of a phosphate group to glutamate to form L-glutamate 5-phosphate. This chain is Glutamate 5-kinase, found in Salmonella agona (strain SL483).